We begin with the raw amino-acid sequence, 211 residues long: CASP-like protein 3A1 (211 aa).

Residues 1–45 are Cytoplasmic-facing; it reads MGSIGNGRSDSVVGIQMPPAGSKMVLEPEALQVTTSPVPRWPRLG. Residues 46 to 66 form a helical membrane-spanning segment; the sequence is VVMVATRAVAMVMALLSMSLM. Residues 67–95 are Extracellular-facing; that stretch reads VSSKQRGILTIFGIEIPLDANWSFSYSLQ. N87 is a glycosylation site (N-linked (GlcNAc...) asparagine). A helical transmembrane segment spans residues 96–116; it reads FLVAMSTASAAYSLAQLLLIA. Residues 117-131 lie on the Cytoplasmic side of the membrane; the sequence is HKAVKKSPIVPSRRH. The chain crosses the membrane as a helical span at residues 132–152; the sequence is AWLLFAGDQVFSLAMMSAGSA. Topologically, residues 153–186 are extracellular; the sequence is AAAVANLNRTGIRHTALPNFCKPLPRFCDLSAVS. The N-linked (GlcNAc...) asparagine glycan is linked to N160. The chain crosses the membrane as a helical span at residues 187 to 207; the sequence is IACAFLSCVFLAASAVIDVIW. The Cytoplasmic portion of the chain corresponds to 208–211; sequence LSSP.

This sequence belongs to the Casparian strip membrane proteins (CASP) family. As to quaternary structure, homodimer and heterodimers.

It is found in the cell membrane. This is CASP-like protein 3A1 from Sorghum bicolor (Sorghum).